We begin with the raw amino-acid sequence, 273 residues long: Urease accessory protein UreD (273 aa).

The protein belongs to the UreD family. UreD, UreF and UreG form a complex that acts as a GTP-hydrolysis-dependent molecular chaperone, activating the urease apoprotein by helping to assemble the nickel containing metallocenter of UreC. The UreE protein probably delivers the nickel.

The protein resides in the cytoplasm. Its function is as follows. Required for maturation of urease via the functional incorporation of the urease nickel metallocenter. The protein is Urease accessory protein UreD of Bacillus cereus (strain ATCC 10987 / NRS 248).